A 135-amino-acid chain; its full sequence is Large ribosomal subunit protein uL16c (135 aa).

The protein belongs to the universal ribosomal protein uL16 family. In terms of assembly, part of the 50S ribosomal subunit.

The protein resides in the plastid. It is found in the chloroplast. The protein is Large ribosomal subunit protein uL16c of Lotus japonicus (Lotus corniculatus var. japonicus).